The sequence spans 652 residues: Forkhead box protein O1 (652 aa).

2 disordered regions span residues 1-62 (MAEA…ASAS) and 112-154 (VHPA…SSRR). Phosphothreonine; by PKB/AKT1 or PKB/AKT2 and SGK1 is present on Thr-24. Over residues 35–62 (SNSTTSSPAPSGGAAANPDAAASLASAS) the composition is skewed to low complexity. Residues 114–133 (PAPPQPPPTGPLSQPPPVPP) show a composition bias toward pro residues. The span at 134–146 (SAAAAAGPLAGQP) shows a compositional bias: low complexity. Positions 156–232 (AWGNLSYADL…VQNEGTGKSS (77 aa)) form a DNA-binding region, fork-head. DNA-binding regions lie at residues 208–215 (NSIRHNLS) and 231–234 (SSWW). Ser-209 is modified (phosphoserine; by STK4/MST1). Phosphoserine occurs at positions 215, 231, and 232. Disordered stretches follow at residues 231 to 342 (SSWW…DVHS) and 383 to 410 (SLTV…PNTS). 2 positions are modified to N6-acetyllysine: Lys-242 and Lys-245. Ser-246 bears the Phosphoserine; by CDK1 mark. Residues Arg-248 and Arg-250 each carry the omega-N-methylarginine; by PRMT1 modification. Residues 248–250 (RRR) carry the Nuclear localization signal motif. Ser-253 carries the post-translational modification Phosphoserine; by PKB/AKT1 and SGK1. N6-acetyllysine is present on residues Lys-259, Lys-262, and Lys-271. Positions 261–272 (AKSRGRAAKKKA) are enriched in basic residues. A sufficient for interaction with NLK region spans residues 280 to 562 (GPGDSPGSQF…TPVKTPLQVP (283 aa)). Residues Ser-284 and Ser-295 each carry the phosphoserine modification. A compositionally biased stretch (polar residues) spans 306–323 (NWSTFRPRTSSNASTISG). Ser-316 is modified (phosphoserine; by PKB/AKT1 or PKB/AKT2). Ser-319 carries the post-translational modification Phosphoserine; by CK1 and SGK1. Ser-322 bears the Phosphoserine; by CK1 mark. Position 326 is a phosphoserine (Ser-326). Phosphothreonine is present on Thr-330. The tract at residues 360 to 456 (SEISNPENME…GGLNQYNCAP (97 aa)) is required for interaction with RUNX2. Residues 392–401 (PGSMMQQTPC) are compositionally biased toward polar residues. Residue Lys-420 is modified to N6-acetyllysine. Residues 459–463 (LKELL) carry the Required for interaction with SIRT1 motif.

In terms of assembly, interacts with EP300 and CREBBP; the interactions acetylate FOXO1. Interacts with the 14-3-3 proteins, YWHAG and YWHAZ; the interactions require insulin-stimulated phosphorylation on Thr-24, promote nuclear exit and loss of transcriptional activity. Interacts with SKP2; the interaction ubiquitinates FOXO1 leading to its proteasomal degradation. Interacts with PMRT1; methylates FOXO1, prevents PKB/AKT1 phosphorylation and retains FOXO1 in the nucleus. Interacts (via an N-terminal domain) with FCOR; the interaction is direct, occurs in a forskolin-independent manner and prevents SIRT1 binding to FOXO1. Interacts (via the C-terminal half) with ATF4 (via its DNA-binding domain); the interaction occurs in osteoblasts, regulates glucose homeostasis via suppression of beta-cell proliferation and subsequent decrease in insulin production. Interacts with RUNX2; the interaction inhibits RUNX2 transcriptional activity and mediates the IGF1/insulin-dependent BGLAP expression in osteoblasts. Interacts with PPP2R1A; the interaction regulates the dephosphorylation of FOXO1 at Thr-24 and Ser-253 leading to its nuclear import. Binds to CDK1. Interacts with LRPPRC. Interacts with RUNX2; the interaction inhibits RUNX2 transcriptional activity and mediates the IGF1/insulin-dependent BGLAP expression in osteoblasts. Interacts with NLK. Interacts with SIRT1; the interaction results in the deacetylation of FOXO1 leading to activation of FOXO1-mediated transcription of genes involved in DNA repair and stress resistance. The interaction requires the presence of KRIT1 and is inhibited by FCOR. Interacts with SIRT2; the interaction is disrupted in response to oxidative stress or serum deprivation, leading to increased level of acetylated FOXO1, which promotes stress-induced autophagy by stimulating E1-like activating enzyme ATG7. Interacts (acetylated form) with ATG7; the interaction is increased in response to oxidative stress or serum deprivation and promotes the autophagic process leading to cell death. Interacts (acetylated form) with PPARG. Interacts with XBP1 isoform 2; this interaction is direct and leads to FOXO1 ubiquitination and degradation via the proteasome pathway. Interacts (via the Fork-head domain) with CEBPA; the interaction increases when FOXO1 is deacetylated. Interacts with WDFY2. Forms a complex with WDFY2 and AKT1. Interacts with CRY1. Interacts with PPIA/CYPA; the interaction promotes FOXO1 dephosphorylation, nuclear accumulation and transcriptional activity. Interacts with TOX4; FOXO1 is required for full induction of TOX4-dependent activity and the interaction is inhibited by insulin. Interacts (when phosphorylated on Ser-253) with STUB1/CHIP. Post-translationally, phosphorylation by NLK promotes nuclear export and inhibits the transcriptional activity. In response to growth factors, phosphorylation on Thr-24, Ser-253 and Ser-319 by PKB/AKT1 promotes nuclear export and inactivation of transactivational activity. Phosphorylation on Thr-24 is required for binding 14-3-3 proteins. Phosphorylation of Ser-253 decreases DNA-binding activity and promotes the phosphorylation of Thr-24 and Ser-316, permitting phosphorylation of Ser-319 and Ser-322, probably by CDK1, leading to nuclear exclusion and loss of function. Stress signals, such as response to oxygen or nitric oxide, attenuate the PKB/AKT1-mediated phosphorylation leading to nuclear retention. Phosphorylation of Ser-326 is independent of IGF1 and leads to reduced function. Dephosphorylated on Thr-24 and Ser-253 by PP2A in beta-cells under oxidative stress leading to nuclear retention. Phosphorylation of Ser-246 by CDK1 disrupts binding of 14-3-3 proteins leading to nuclear accumulation and has no effect on DNA-binding nor transcriptional activity. Phosphorylation by STK4/MST1 on Ser-209, upon oxidative stress, inhibits binding to 14-3-3 proteins and nuclear export. PPIA/CYPA promotes its dephosphorylation on Ser-253. Ubiquitinated by SKP2. Ubiquitinated, leading to proteasomal degradation. Ubiquitinated by STUB1/CHIP; when Ser-253 is phosphorylated. In terms of processing, methylation inhibits PKB/AKT1-mediated phosphorylation at Ser-253, promoting nuclear retention and increasing the transcriptional activity and cell death. Methylation increased by oxidative stress. Post-translationally, acetylation at Lys-259 and Lys-271 are necessary for autophagic cell death induction. Deacetylated by SIRT2 in response to oxidative stress or serum deprivation, thereby negatively regulating FOXO1-mediated autophagic cell death. Once in the nucleus, acetylated by CREBBP/EP300. Acetylation diminishes the interaction with target DNA and attenuates the transcriptional activity. It increases the phosphorylation at Ser-253, and is required for the transcriptional inhibition by FCOR. Deacetylation by SIRT1 results in reactivation of the transcriptional activity. Acetylation of FOXO1 diminishes its binding to PPARG in adipocytes. Deacetylated by SIRT2; deacetylation of FOXO1 directly increases its repressive binding to PPARG and inhibits adipocyte differentiation. Oxidative stress by hydrogen peroxide treatment appears to promote deacetylation and uncoupling of insulin-induced phosphorylation. By contrast, resveratrol acts independently of acetylation. Acetylated at Lys-420, promoting its localization to the nucleus and transcription factor activity. Deacetylation at Lys-420 by SIRT6, promotes its translocation into the cytoplasm, preventing its transcription factor activity. Deacetylation and subsequent inhibition by SIRT6 has different effects depending on cell types: it inhibits gluconeogenesis in hepatocytes, promotes glucose sensing in pancreatic beta-cells and regulates lipid catabolism in brown adipocytes. Expressed in liver, white and brown adipose tissues (at protein level).

It is found in the cytoplasm. The protein localises to the nucleus. Transcription factor that is the main target of insulin signaling and regulates metabolic homeostasis in response to oxidative stress. Binds to the insulin response element (IRE) with consensus sequence 5'-TT[G/A]TTTTG-3' and the related Daf-16 family binding element (DBE) with consensus sequence 5'-TT[G/A]TTTAC-3'. Activity suppressed by insulin. Main regulator of redox balance and osteoblast numbers and controls bone mass. Orchestrates the endocrine function of the skeleton in regulating glucose metabolism. Also acts as a key regulator of chondrogenic commitment of skeletal progenitor cells in response to lipid availability: when lipids levels are low, translocates to the nucleus and promotes expression of SOX9, which induces chondrogenic commitment and suppresses fatty acid oxidation. Acts synergistically with ATF4 to suppress osteocalcin/BGLAP activity, increasing glucose levels and triggering glucose intolerance and insulin insensitivity. Also suppresses the transcriptional activity of RUNX2, an upstream activator of osteocalcin/BGLAP. Acts as an inhibitor of glucose sensing in pancreatic beta cells by acting as a transcription repressor and suppressing expression of PDX1. In hepatocytes, promotes gluconeogenesis by acting together with PPARGC1A and CEBPA to activate the expression of genes such as IGFBP1, G6PC1 and PCK1. Also promotes gluconeogenesis by directly promoting expression of PPARGC1A and G6PC1. Important regulator of cell death acting downstream of CDK1, PKB/AKT1 and STK4/MST1. Promotes neural cell death. Mediates insulin action on adipose tissue. Regulates the expression of adipogenic genes such as PPARG during preadipocyte differentiation and, adipocyte size and adipose tissue-specific gene expression in response to excessive calorie intake. Regulates the transcriptional activity of GADD45A and repair of nitric oxide-damaged DNA in beta-cells. Required for the autophagic cell death induction in response to starvation or oxidative stress in a transcription-independent manner. Mediates the function of MLIP in cardiomyocytes hypertrophy and cardiac remodeling. Positive regulator of apoptosis in cardiac smooth muscle cells as a result of its transcriptional activation of pro-apoptotic genes. Regulates endothelial cell (EC) viability and apoptosis in a PPIA/CYPA-dependent manner via transcription of CCL2 and BCL2L11 which are involved in EC chemotaxis and apoptosis. The chain is Forkhead box protein O1 (Foxo1) from Mus musculus (Mouse).